Reading from the N-terminus, the 241-residue chain is Uridylate kinase (241 aa).

15–18 (KLSG) lines the ATP pocket. The interval 23 to 28 (GTEGFG) is involved in allosteric activation by GTP. UMP is bound at residue Gly57. Positions 58 and 62 each coordinate ATP. UMP contacts are provided by residues Asp77 and 138–145 (TGNPFFTT). Residues Thr165, Phe171, and Asp174 each contribute to the ATP site.

The protein belongs to the UMP kinase family. Homohexamer.

The protein localises to the cytoplasm. It catalyses the reaction UMP + ATP = UDP + ADP. The protein operates within pyrimidine metabolism; CTP biosynthesis via de novo pathway; UDP from UMP (UMPK route): step 1/1. Its activity is regulated as follows. Allosterically activated by GTP. Inhibited by UTP. Its function is as follows. Catalyzes the reversible phosphorylation of UMP to UDP. The protein is Uridylate kinase of Salmonella choleraesuis (strain SC-B67).